The sequence spans 404 residues: NADH-quinone oxidoreductase subunit D 1 (404 aa).

Belongs to the complex I 49 kDa subunit family. As to quaternary structure, NDH-1 is composed of 14 different subunits. Subunits NuoB, C, D, E, F, and G constitute the peripheral sector of the complex.

It localises to the cell membrane. It catalyses the reaction a quinone + NADH + 5 H(+)(in) = a quinol + NAD(+) + 4 H(+)(out). Functionally, NDH-1 shuttles electrons from NADH, via FMN and iron-sulfur (Fe-S) centers, to quinones in the respiratory chain. The immediate electron acceptor for the enzyme in this species is believed to be a menaquinone. Couples the redox reaction to proton translocation (for every two electrons transferred, four hydrogen ions are translocated across the cytoplasmic membrane), and thus conserves the redox energy in a proton gradient. The polypeptide is NADH-quinone oxidoreductase subunit D 1 (Symbiobacterium thermophilum (strain DSM 24528 / JCM 14929 / IAM 14863 / T)).